We begin with the raw amino-acid sequence, 613 residues long: Probable hydrolase clz13 (613 aa).

Positions Met-1 to Ala-25 are cleaved as a signal peptide. Residues Asn-61, Asn-89, Asn-286, Asn-422, Asn-456, Asn-477, and Asn-581 are each glycosylated (N-linked (GlcNAc...) asparagine).

It belongs to the beta-lactamase family.

It functions in the pathway secondary metabolite biosynthesis. Functionally, probable hydrolase; part of the gene cluster that mediates the biosynthesis of squalestatin S1 (SQS1, also known as zaragozic acid A), a heavily oxidized fungal polyketide that offers potent cholesterol lowering activity by targeting squalene synthase (SS). SQS1 is composed of a 2,8-dioxobicyclic[3.2.1]octane-3,4,5-tricarboxyclic acid core that is connected to two lipophilic polyketide arms. These initial steps feature the priming of an unusual benzoic acid starter unit onto the highly reducing polyketide synthase clz14, followed by oxaloacetate extension and product release to generate a tricarboxylic acid containing product. The phenylalanine ammonia lyase (PAL) clz10 and the acyl-CoA ligase clz12 are involved in transforming phenylalanine into benzoyl-CoA. The citrate synthase-like protein clz17 is involved in connecting the C-alpha-carbons of the hexaketide chain and oxaloacetate to afford the tricarboxylic acid unit. The potential hydrolytic enzymes, clz11 and clz13, are in close proximity to pks2 and may participate in product release. On the other side, the tetraketide arm is synthesized by a the squalestatin tetraketide synthase clz2 and enzymatically esterified to the core in the last biosynthetic step, by the acetyltransferase clz6. The biosynthesis of the tetraketide must involve 3 rounds of chain extension. After the first and second rounds methyl-transfer occurs, and in all rounds of extension the ketoreductase and dehydratase are active. The enoyl reductase and C-MeT of clz2 are not active in the final round of extension. The acetyltransferase clz6 appears to have a broad substrate selectivity for its acyl CoA substrate, allowing the in vitro synthesis of novel squalestatins. The biosynthesis of SQS1 requires several oxidative steps likely performed by oxidoreductases clz3, clz15 and clz16. Finally, in support of the identification of the cluster as being responsible for SQS1 production, the cluster contains a gene encoding a putative squalene synthase (SS) clz20, suggesting a likely mechanism for self-resistance. The sequence is that of Probable hydrolase clz13 from Cochliobolus lunatus (Filamentous fungus).